The following is a 438-amino-acid chain: Serine--tRNA ligase (438 aa).

Position 243-245 (243-245 (TAE)) interacts with L-serine. Residue 274-276 (RSE) participates in ATP binding. Glu297 is a binding site for L-serine. 361–364 (EISS) is an ATP binding site. Ser396 provides a ligand contact to L-serine.

Belongs to the class-II aminoacyl-tRNA synthetase family. Type-1 seryl-tRNA synthetase subfamily. Homodimer. The tRNA molecule binds across the dimer.

Its subcellular location is the cytoplasm. The catalysed reaction is tRNA(Ser) + L-serine + ATP = L-seryl-tRNA(Ser) + AMP + diphosphate + H(+). It carries out the reaction tRNA(Sec) + L-serine + ATP = L-seryl-tRNA(Sec) + AMP + diphosphate + H(+). Its pathway is aminoacyl-tRNA biosynthesis; selenocysteinyl-tRNA(Sec) biosynthesis; L-seryl-tRNA(Sec) from L-serine and tRNA(Sec): step 1/1. In terms of biological role, catalyzes the attachment of serine to tRNA(Ser). Is also able to aminoacylate tRNA(Sec) with serine, to form the misacylated tRNA L-seryl-tRNA(Sec), which will be further converted into selenocysteinyl-tRNA(Sec). In Ralstonia pickettii (strain 12J), this protein is Serine--tRNA ligase.